The chain runs to 94 residues: Large ribosomal subunit protein bL25 (94 aa).

The protein belongs to the bacterial ribosomal protein bL25 family. Part of the 50S ribosomal subunit; part of the 5S rRNA/L5/L18/L25 subcomplex. Contacts the 5S rRNA. Binds to the 5S rRNA independently of L5 and L18.

This is one of the proteins that binds to the 5S RNA in the ribosome where it forms part of the central protuberance. This is Large ribosomal subunit protein bL25 from Salmonella agona (strain SL483).